We begin with the raw amino-acid sequence, 1288 residues long: Probable serine/threonine-protein kinase drkD (1288 aa).

Positions 1 to 12 (MEGSFQFNKSKQ) are enriched in polar residues. Disordered regions lie at residues 1-132 (MEGS…QYHP), 156-223 (FNVS…PEEI), and 269-386 (SFGH…DDEE). Low complexity-rich tracts occupy residues 13–79 (TNNN…NSTS) and 156–220 (FNVS…QQQP). Residues 221–248 (EEIEGELNRERQERDKMLHEEAEIEQYK) adopt a coiled-coil conformation. Residues 271 to 291 (GHITSANSDETTNNESGSPIN) are compositionally biased toward polar residues. The span at 302–343 (PHSSHNEDHQSDQDNHGQFMNDEHQSTDDDQNKSDNEKESES) shows a compositional bias: basic and acidic residues. The segment covering 344 to 354 (ARNSGDLQQKV) has biased composition (polar residues). A compositionally biased stretch (acidic residues) spans 376-386 (EGEEEDDDDEE). LRR repeat units lie at residues 400–421 (KSTK…VWSI), 423–444 (ELRD…IGLL), 446–468 (HLKR…YSLP), 469–490 (RLTT…INRL), 492–513 (SLKT…TNLH), 517–538 (NLVE…MLES), and 540–561 (HLQV…LKKS). Disordered regions lie at residues 690-717 (WDQQ…VLTG), 733-764 (PTQQ…QQQQ), and 796-825 (QQQQ…KDHQ). 2 stretches are compositionally biased toward polar residues: residues 701–717 (SPNV…VLTG) and 733–757 (PTQQ…HNNN). The region spanning 851 to 1104 (IAIGARIGRG…EILPIMEGMI (254 aa)) is the Protein kinase domain. ATP-binding positions include 857–865 (IGRGGYGQV) and K878. Catalysis depends on D974, which acts as the Proton acceptor. Disordered stretches follow at residues 1118–1141 (GRPI…QNMA) and 1245–1288 (QQQL…NDKK). Over residues 1257–1268 (NRLNYNFNNSNN) the composition is skewed to low complexity. A compositionally biased stretch (polar residues) spans 1269-1282 (SDIQPMQQENNYRM).

It belongs to the protein kinase superfamily. TKL Ser/Thr protein kinase family.

It catalyses the reaction L-seryl-[protein] + ATP = O-phospho-L-seryl-[protein] + ADP + H(+). The enzyme catalyses L-threonyl-[protein] + ATP = O-phospho-L-threonyl-[protein] + ADP + H(+). This Dictyostelium discoideum (Social amoeba) protein is Probable serine/threonine-protein kinase drkD (drkD).